A 1368-amino-acid polypeptide reads, in one-letter code: DNA-directed RNA polymerase subunit beta (1368 aa).

Belongs to the RNA polymerase beta chain family. In terms of assembly, the RNAP catalytic core consists of 2 alpha, 1 beta, 1 beta' and 1 omega subunit. When a sigma factor is associated with the core the holoenzyme is formed, which can initiate transcription.

The enzyme catalyses RNA(n) + a ribonucleoside 5'-triphosphate = RNA(n+1) + diphosphate. Functionally, DNA-dependent RNA polymerase catalyzes the transcription of DNA into RNA using the four ribonucleoside triphosphates as substrates. The protein is DNA-directed RNA polymerase subunit beta of Cupriavidus taiwanensis (strain DSM 17343 / BCRC 17206 / CCUG 44338 / CIP 107171 / LMG 19424 / R1) (Ralstonia taiwanensis (strain LMG 19424)).